The chain runs to 150 residues: Phosphopantetheine adenylyltransferase (150 aa).

Substrate is bound at residue S10. ATP contacts are provided by residues 10–11 and H18; that span reads SF. Substrate is bound by residues K42, T74, and R88. Residues 89 to 91, E99, and 124 to 130 each bind ATP; these read GLR and LAYISSS.

This sequence belongs to the bacterial CoaD family. Homohexamer. It depends on Mg(2+) as a cofactor.

Its subcellular location is the cytoplasm. It catalyses the reaction (R)-4'-phosphopantetheine + ATP + H(+) = 3'-dephospho-CoA + diphosphate. It functions in the pathway cofactor biosynthesis; coenzyme A biosynthesis; CoA from (R)-pantothenate: step 4/5. Functionally, reversibly transfers an adenylyl group from ATP to 4'-phosphopantetheine, yielding dephospho-CoA (dPCoA) and pyrophosphate. The polypeptide is Phosphopantetheine adenylyltransferase (Cytophaga hutchinsonii (strain ATCC 33406 / DSM 1761 / CIP 103989 / NBRC 15051 / NCIMB 9469 / D465)).